Here is a 207-residue protein sequence, read N- to C-terminus: Thiamine-phosphate synthase (207 aa).

4-amino-2-methyl-5-(diphosphooxymethyl)pyrimidine is bound by residues glutamine 36 to lysine 40 and asparagine 68. The Mg(2+) site is built by aspartate 69 and aspartate 88. A 4-amino-2-methyl-5-(diphosphooxymethyl)pyrimidine-binding site is contributed by serine 106. 2-[(2R,5Z)-2-carboxy-4-methylthiazol-5(2H)-ylidene]ethyl phosphate is bound at residue threonine 132 to threonine 134. Lysine 135 is a binding site for 4-amino-2-methyl-5-(diphosphooxymethyl)pyrimidine. 2-[(2R,5Z)-2-carboxy-4-methylthiazol-5(2H)-ylidene]ethyl phosphate-binding positions include glycine 162 and valine 182–serine 183.

It belongs to the thiamine-phosphate synthase family. The cofactor is Mg(2+).

It catalyses the reaction 2-[(2R,5Z)-2-carboxy-4-methylthiazol-5(2H)-ylidene]ethyl phosphate + 4-amino-2-methyl-5-(diphosphooxymethyl)pyrimidine + 2 H(+) = thiamine phosphate + CO2 + diphosphate. The catalysed reaction is 2-(2-carboxy-4-methylthiazol-5-yl)ethyl phosphate + 4-amino-2-methyl-5-(diphosphooxymethyl)pyrimidine + 2 H(+) = thiamine phosphate + CO2 + diphosphate. It carries out the reaction 4-methyl-5-(2-phosphooxyethyl)-thiazole + 4-amino-2-methyl-5-(diphosphooxymethyl)pyrimidine + H(+) = thiamine phosphate + diphosphate. The protein operates within cofactor biosynthesis; thiamine diphosphate biosynthesis; thiamine phosphate from 4-amino-2-methyl-5-diphosphomethylpyrimidine and 4-methyl-5-(2-phosphoethyl)-thiazole: step 1/1. Condenses 4-methyl-5-(beta-hydroxyethyl)thiazole monophosphate (THZ-P) and 2-methyl-4-amino-5-hydroxymethyl pyrimidine pyrophosphate (HMP-PP) to form thiamine monophosphate (TMP). This chain is Thiamine-phosphate synthase, found in Methanococcus maripaludis (strain C5 / ATCC BAA-1333).